The primary structure comprises 533 residues: Calcitonin receptor (533 aa).

The first 41 residues, 1 to 41, serve as a signal peptide directing secretion; that stretch reads MTPRRSRVKRRNLRKPKMRFLLVNRFTLLLLLLVSPTPVLQ. The Extracellular segment spans residues 42-163; it reads APTNLTDSGL…FTSEKLQNAY (122 aa). 4 N-linked (GlcNAc...) asparagine glycosylation sites follow: N45, N90, N142, and N147. 3 disulfide bridges follow: C72/C98, C89/C129, and C112/C151. A helical membrane pass occupies residues 164–186; it reads VLYYLALVGHSLSIAALVASMLI. Over 187–198 the chain is Cytoplasmic; it reads FWIFKNLSCQRV. A helical transmembrane segment spans residues 199 to 219; it reads TLHKHMFLTYILNSIIIIIHL. Topologically, residues 220-273 are extracellular; it reads VEVVPNGDLVRRDPMHIFHHNTHMWTMQWELSPPLPLSAHEGKMDPHASEVISC. An intrachain disulfide couples C273 to C343. The chain crosses the membrane as a helical span at residues 274 to 296; the sequence is KVLHFLHQYMMSCNYFWMLCEGI. The Cytoplasmic portion of the chain corresponds to 297–313; the sequence is YLHTLIVMAVFTDEQRL. A helical membrane pass occupies residues 314–334; it reads RWYYLLGWGFPIVPTIIHAIT. Over 335–350 the chain is Extracellular; it reads RALYYNDNCWLSAETH. A helical transmembrane segment spans residues 351 to 374; that stretch reads LLYIIHGPVMVALVVNFFFLLNIV. The Cytoplasmic portion of the chain corresponds to 375-394; that stretch reads RVLVTKMRQTHEAESYMYLK. Residues 395–413 traverse the membrane as a helical segment; that stretch reads AVKATMVLVPLLGIQFVVF. Topologically, residues 414-421 are extracellular; it reads PWRPSNKV. A helical transmembrane segment spans residues 422–448; sequence LGKIYDYLMHSLIHFQGFFVATIYCFC. The Cytoplasmic portion of the chain corresponds to 449–533; sequence NHEVQVTLKR…MNVIQQDASA (85 aa).

It belongs to the G-protein coupled receptor 2 family. As to quaternary structure, heterodimer of CALCR and RAMP1, RAMP2 or RAMP3; the receptor complexes function as AMYR1, AMYR2 and AMYR3 receptors, respectively, and respond to amylin/IAPP, calcitonin/CT and CGRP1 ligands. Interacts with GPRASP2.

The protein resides in the cell membrane. Functionally, g protein-coupled receptor activated by ligand peptides amylin (IAPP), calcitonin (CT/CALCA) and calcitonin gene-related peptide type 1 (CGRP1/CALCA). CALCR interacts with receptor-activity-modifying proteins RAMP1, 2 and 3 to form receptor complexes AMYR1, 2 and 3, respectively. IAPP, CT and CGRP1 activate CALCR and AMYRs with distinct modes of receptor activation resulting in specific phenotypes. Ligand binding causes a conformation change that triggers signaling via guanine nucleotide-binding proteins (G proteins) and modulates the activity of downstream effectors. Activates cAMP-dependent pathway. The protein is Calcitonin receptor of Mus musculus (Mouse).